Here is a 434-residue protein sequence, read N- to C-terminus: GTPase Obg (434 aa).

Residues 1-158 (MFLDTAKIKV…RELQLELKIL (158 aa)) form the Obg domain. The region spanning 159–336 (ADVGLVGFPS…LLDATAELLD (178 aa)) is the OBG-type G domain. Residues 165–172 (GFPSVGKS), 190–194 (FTTIV), 212–215 (DLPG), 282–285 (NKMD), and 317–319 (SGL) contribute to the GTP site. Mg(2+)-binding residues include serine 172 and threonine 192. Positions 356 to 434 (GFDEEEKAFE…IGKFEFEFVD (79 aa)) constitute an OCT domain.

It belongs to the TRAFAC class OBG-HflX-like GTPase superfamily. OBG GTPase family. Monomer. Requires Mg(2+) as cofactor.

The protein localises to the cytoplasm. Its function is as follows. An essential GTPase which binds GTP, GDP and possibly (p)ppGpp with moderate affinity, with high nucleotide exchange rates and a fairly low GTP hydrolysis rate. Plays a role in control of the cell cycle, stress response, ribosome biogenesis and in those bacteria that undergo differentiation, in morphogenesis control. In Streptococcus pneumoniae serotype 19F (strain G54), this protein is GTPase Obg.